The sequence spans 311 residues: Ferrochelatase (311 aa).

Fe cation is bound by residues histidine 179 and glutamate 260.

This sequence belongs to the ferrochelatase family.

The protein resides in the cytoplasm. The enzyme catalyses heme b + 2 H(+) = protoporphyrin IX + Fe(2+). Its pathway is porphyrin-containing compound metabolism; protoheme biosynthesis; protoheme from protoporphyrin-IX: step 1/1. Its function is as follows. Catalyzes the ferrous insertion into protoporphyrin IX. The protein is Ferrochelatase of Helicobacter hepaticus (strain ATCC 51449 / 3B1).